A 121-amino-acid chain; its full sequence is MNEEVSRPTRVALEIRKTLMEILHRDTKDPRLEKVNITECKISKDLSIATVYFTIIGVNEKDQPAQDAIKALEKAKGFFRSEIGKRMNLRITPEVRFFYDTVAENASHIEELIFKALHQKK.

It belongs to the RbfA family. As to quaternary structure, monomer. Binds 30S ribosomal subunits, but not 50S ribosomal subunits or 70S ribosomes.

The protein localises to the cytoplasm. In terms of biological role, one of several proteins that assist in the late maturation steps of the functional core of the 30S ribosomal subunit. Associates with free 30S ribosomal subunits (but not with 30S subunits that are part of 70S ribosomes or polysomes). Required for efficient processing of 16S rRNA. May interact with the 5'-terminal helix region of 16S rRNA. The chain is Ribosome-binding factor A from Hydrogenovibrio crunogenus (strain DSM 25203 / XCL-2) (Thiomicrospira crunogena).